The chain runs to 111 residues: Cornifelin homolog (111 aa).

Belongs to the cornifelin family.

The chain is Cornifelin homolog (cnfn) from Xenopus tropicalis (Western clawed frog).